We begin with the raw amino-acid sequence, 238 residues long: Isoprene-epoxide--glutathione S-transferase (238 aa).

The GST N-terminal domain maps to 7–82 (YVPAWGIPDI…YLKNKFGDKL (76 aa)). The GST C-terminal domain occupies 118–238 (DAGWETYIPF…LERIRKQYDI (121 aa)).

Belongs to the GST superfamily. In terms of assembly, homodimer.

It carries out the reaction 2-glutathionyl-2-methylbut-3-en-1-ol = (3R)-3,4-epoxy-3-methylbut-1-ene + glutathione. Its activity is regulated as follows. Activity is inhibited by 1,2-epoxyhexane. Involved in isoprene degradation. Catalyzes the glutathione-dependent ring opening of various epoxides. The highest conversion rate is observed with the physiological substrate, 3,4-epoxy-3-methyl-1-butene, which is the primary oxidation product of isoprene. It can also use other epoxides, including epoxyethane, epoxypropane, epithiopropane, epichlorohydrin, epifluorohydrin, epibromohydrin, 1,2-epoxybutane, 1,2-epoxyhexane, cis-2,3-epoxybutane, cis-1,2-dichloroepoxyethane and trans-1,2-dichloroepoxyethane. This is Isoprene-epoxide--glutathione S-transferase from Rhodococcus sp. (strain AD45).